The primary structure comprises 498 residues: Transcription factor bHLH78 (498 aa).

Disordered regions lie at residues 1–24 (MDNE…FEHQ) and 207–297 (LVSP…PPKD). Positions 233–246 (NPISTASPSPSFSK) are enriched in polar residues. The segment covering 259-270 (SSEEKGGKRRRE) has biased composition (basic and acidic residues). Residues 271 to 281 (EEDDEEEEGEG) are compositionally biased toward acidic residues. Residues 307–357 (QATDSHSLAERVRREKIGERMKLLQDLVPGCNKVTGKALMLDEIINYVQSL) enclose the bHLH domain.

As to quaternary structure, homodimer. Binds reversibly to CRY2 after blue light illumination. In terms of tissue distribution, expressed constitutively in roots, leaves, stems, and flowers.

The protein localises to the nucleus. In terms of biological role, transcription factor that binds DNA to G box 5'-CACGTG-3' and to E-box 5'-CANNTG-3'. Binds to chromatin DNA of the FT gene and promotes its expression, and thus triggers flowering in response to blue light. The protein is Transcription factor bHLH78 (BHLH78) of Arabidopsis thaliana (Mouse-ear cress).